Here is a 183-residue protein sequence, read N- to C-terminus: dCTP deaminase (183 aa).

DCTP is bound at residue 106-111; sequence KSTYAR. The active-site Proton donor/acceptor is Glu132. Residues Gln151, Tyr165, and Gln175 each contribute to the dCTP site.

The protein belongs to the dCTP deaminase family. Homotrimer.

The enzyme catalyses dCTP + H2O + H(+) = dUTP + NH4(+). It functions in the pathway pyrimidine metabolism; dUMP biosynthesis; dUMP from dCTP (dUTP route): step 1/2. Its function is as follows. Catalyzes the deamination of dCTP to dUTP. This chain is dCTP deaminase, found in Gluconobacter oxydans (strain 621H) (Gluconobacter suboxydans).